A 78-amino-acid chain; its full sequence is Small ribosomal subunit protein bS16c (78 aa).

This sequence belongs to the bacterial ribosomal protein bS16 family.

Its subcellular location is the plastid. The protein resides in the chloroplast. The polypeptide is Small ribosomal subunit protein bS16c (Panax ginseng (Korean ginseng)).